Reading from the N-terminus, the 371-residue chain is DNA replication and repair protein RecF (371 aa).

30 to 37 (GKNGQGKT) provides a ligand contact to ATP.

Belongs to the RecF family.

It localises to the cytoplasm. In terms of biological role, the RecF protein is involved in DNA metabolism; it is required for DNA replication and normal SOS inducibility. RecF binds preferentially to single-stranded, linear DNA. It also seems to bind ATP. The sequence is that of DNA replication and repair protein RecF from Clostridioides difficile (strain 630) (Peptoclostridium difficile).